The chain runs to 259 residues: Deoxyribose-phosphate aldolase (259 aa).

Asp-102 (proton donor/acceptor) is an active-site residue. Catalysis depends on Lys-167, which acts as the Schiff-base intermediate with acetaldehyde. Lys-201 functions as the Proton donor/acceptor in the catalytic mechanism.

The protein belongs to the DeoC/FbaB aldolase family. DeoC type 2 subfamily.

The protein resides in the cytoplasm. The catalysed reaction is 2-deoxy-D-ribose 5-phosphate = D-glyceraldehyde 3-phosphate + acetaldehyde. It participates in carbohydrate degradation; 2-deoxy-D-ribose 1-phosphate degradation; D-glyceraldehyde 3-phosphate and acetaldehyde from 2-deoxy-alpha-D-ribose 1-phosphate: step 2/2. Functionally, catalyzes a reversible aldol reaction between acetaldehyde and D-glyceraldehyde 3-phosphate to generate 2-deoxy-D-ribose 5-phosphate. The protein is Deoxyribose-phosphate aldolase of Klebsiella pneumoniae (strain 342).